The primary structure comprises 1669 residues: Dystrophin, isoform B (1669 aa).

Residues 1–11 (MTAKPPPPIPP) are compositionally biased toward pro residues. 5 disordered regions span residues 1-28 (MTAKPPPPIPPTLGGDDSGTHGPKLAPE), 43-243 (RGQQ…SEDA), 327-356 (RAQAQQQSLLNNSSSSSSNSQVEQSMRSTI), 389-417 (GGGGGNSSTGNAVANSGTSGSQQPPMPLS), and 481-508 (SGALSREELRMRRRSSHDETQLTQNSSG). Over residues 53 to 62 (SQEQHATNTL) the composition is skewed to polar residues. Positions 118 to 131 (GLPPTMRQPPPLPR) are enriched in pro residues. The span at 132 to 147 (KPASTQSSAQNSAQSS) shows a compositional bias: low complexity. Basic and acidic residues predominate over residues 153–166 (KFKDKPPPPPEKHS). 2 stretches are compositionally biased toward low complexity: residues 328–347 (AQAQQQSLLNNSSSSSSNSQ) and 396–405 (STGNAVANSG). The segment covering 485 to 500 (SREELRMRRRSSHDET) has biased composition (basic and acidic residues). 4 Spectrin repeats span residues 541 to 643 (QRFE…KQLH), 650 to 747 (QSFD…NRLE), 754 to 883 (NALL…HRLD), and 890 to 990 (RQFQ…KVLC). The segment at 827 to 851 (VSDTSDTEANHDSDSRYMSAEEQSR) is disordered. The tract at residues 994 to 1024 (AQQTHENGDDGRTTSNSGTIGPLPNLGQSVK) is disordered. Positions 1021–1054 (QSVKPPWERATTAANVPYYIDHERETTHWDHPEM) constitute a WW domain. A ZZ-type zinc finger spans residues 1279 to 1335 (KHQAKCNICKEYPIVGFRYRCLKCFNFDMCQKCFFFGRNAKNHKLTHPMHEYCTTTT). Zn(2+) contacts are provided by cysteine 1284, cysteine 1287, cysteine 1299, cysteine 1302, cysteine 1308, cysteine 1311, histidine 1321, and histidine 1325. A Phosphoserine modification is found at serine 1379. 2 disordered regions span residues 1488-1516 (EQSGMPEDSNGMQHSSSSMTGLSGQGEQG) and 1559-1669 (DEPN…ELQK). Composition is skewed to polar residues over residues 1497–1509 (NGMQHSSSSMTGL) and 1580–1611 (ALNSKPNTLQTRSVTASQLNTDSPAKMNQQNG). Over residues 1630-1641 (QELESINDDLED) the composition is skewed to acidic residues. Residues 1642-1660 (SSSSNTTNTTTTTTTTATT) are compositionally biased toward low complexity.

Component of the dystrophin associated protein complex (DAPC). Interacts with Dg, via the Dg WW domain binding sites. In terms of tissue distribution, expressed in neuronally derived tissues, mainly the CNS and the brain of stage 16 embryos. Lower level expression is seen in the sensory organs. Expression is absent from the musculature. In larvae, expression is predominant throughout the neuropil and brain and in the eye antennal disks.

It localises to the cell membrane. The protein localises to the sarcolemma. The protein resides in the cytoplasm. Its subcellular location is the cytoskeleton. Required for the maintenance of appropriate synaptic retrograde communication and the stabilization of muscle cell architecture or physiology. May play a role in anchoring the cytoskeleton to the plasma membrane. The protein is Dystrophin, isoform B (Dys) of Drosophila melanogaster (Fruit fly).